The following is a 952-amino-acid chain: UPF0182 protein SRU_2225 (952 aa).

7 helical membrane-spanning segments follow: residues 12-32 (ILLGIIGVVFTVLLVTPGLVV), 52-72 (AQVLLFVLVFLVAGLYFGGNF), 109-129 (LGYVVAGVLSLLFAAGFSGRW), 168-188 (AVVGLAFLGLLALVTGYVIAG), 207-227 (LGANLIFLLLGWAWGFYLDLY), 247-267 (VVIPALYVMVAATLVLAGLVG), and 277-297 (LLGIGGAGYLVLLVGGLVLAP). Residues 917–952 (VPLPDTTGTVPPPTSSDTTGTMTAPTGDVSEVTGGS) form a disordered region. The segment covering 931–940 (SSDTTGTMTA) has biased composition (polar residues).

Belongs to the UPF0182 family.

It is found in the cell membrane. This is UPF0182 protein SRU_2225 from Salinibacter ruber (strain DSM 13855 / M31).